The chain runs to 715 residues: Metastasis-associated protein MTA1 (715 aa).

The 164-residue stretch at 1–164 folds into the BAH domain; sequence MAANMYRVGD…PQQKTLLADK (164 aa). One can recognise an ELM2 domain in the interval 165–276; that stretch reads GEIRVGNRYQ…KAISALVPQG (112 aa). Lys-182 participates in a covalent cross-link: Glycyl lysine isopeptide (Lys-Gly) (interchain with G-Cter in ubiquitin). Residues 283–335 form the SANT domain; sequence DEMEEWSASEANLFEEALEKYGKDFTDIQQDFLPWKSLTSIIEYYYMWKTTDR. Ser-386 bears the Phosphoserine mark. The segment at 393–420 adopts a GATA-type; atypical zinc-finger fold; it reads CESCYTTQSYQWYSWGPPNMQCRLCASC. Residues 435–460 form a disordered region; the sequence is RLDGERPGPNRSNMSPHGLPARSSGS. A phosphoserine mark is found at Ser-446 and Ser-449. Lys-509 is covalently cross-linked (Glycyl lysine isopeptide (Lys-Gly) (interchain with G-Cter in SUMO2 and SUMO3)). A Phosphoserine modification is found at Ser-522. The SH3-binding signature appears at 545-552; the sequence is PRPPKPDP. A Glycyl lysine isopeptide (Lys-Gly) (interchain with G-Cter in SUMO2) cross-link involves residue Lys-549. A Phosphothreonine modification is found at Thr-564. Ser-576 bears the Phosphoserine mark. A Phosphothreonine modification is found at Thr-578. Lys-626 carries the N6-acetyllysine; alternate modification. Lys-626 is covalently cross-linked (Glycyl lysine isopeptide (Lys-Gly) (interchain with G-Cter in ubiquitin); alternate). At Ser-639 the chain carries Phosphoserine. The tract at residues 656–686 is interaction with RBBP4; it reads DVFYMATEETRKIRKLLSSSETKRAARRPYK. The interval 673 to 715 is disordered; it reads SSSETKRAARRPYKPIALRQSQALPPRPPPPAPVNDEPIVIED. The SH3-binding signature appears at 696-705; the sequence is LPPRPPPPAP. The SUMO interaction motif 1 (SIM); crucial for efficient sumoylation signature appears at 711 to 715; it reads IVIED.

It belongs to the metastasis-associated protein family. Component of the nucleosome remodeling and deacetylase (NuRD) repressor complex, composed of core proteins MTA1, MTA2, MTA3, RBBP4, RBBP7, HDAC1, HDAC2, MBD2, MBD3, and peripherally associated proteins CDK2AP1, CDK2AP2, GATAD2A, GATAD2B, CHD3, CHD4 and CHD5. The exact stoichiometry of the NuRD complex is unknown, and some subunits such as MBD2 and MBD3, GATAD2A and GATAD2B, and CHD3, CHD4 and CHD5 define mutually exclusive NuRD complexes. Interacts with RBBP4; the interaction is direct. Interacts with BMAL1. Interacts with CLOCK. Interacts with COP1. Interacts with CSNK1G2 in the cytoplasm. Interacts with EP300. Interacts with HDAC2. Interacts with IFI16. Interacts with ITGB3BP/CENPR. Interacts with MBD3L2. Interacts with MDM2. Interacts with NACC2. Interacts with p53/TP53. Interacts with PIAS1. Interacts with PIAS3. Interacts with PIAS4. Interacts with PWWP2A. Interacts with PWWP2B. Interacts with SENP1. Interacts with SENP2. Interacts with SIX3; facilitates the binding of SIX3 to the core DNA motif of SIX3 promoter. Interacts with SUMO1. Interacts with SUMO2. Interacts with TFCP2L1; which is indispensable for TFCP2L1-mediated self-renewal-promoting effect and endoderm-inhibiting action. Interacts with TFAP2C. Interacts with TPR. Interacts with UBE2I/UBC9. Phosphorylation by CSNK1G2/CK1 triggered by estrogen enhances corepression of estrogen receptor (ER). Post-translationally, acetylation is essential for its transcriptional coactivator activity. In terms of processing, sumoylation positively regulates its transcriptional corepressor activity but does not affect the protein stability. Sumoylated preferentially by SUMO2 or SUMO3 than SUMO1. Sumoylation is enhanced by PIAS1/3/4 and preferentially sumoylated by SUMO2 in the presence of PIAS1/3/4. Desumoylated by SENP1. Ubiquitinated by COP1, which leads to proteasomal degradation. In terms of tissue distribution, widely expressed. High expression in brain, liver, kidney, and cardiac muscle, ovaries, adrenal glands and virgin mammary glands. Higher in tumors than in adjacent normal tissue from the same individual. Up-regulated in a wide variety of cancers including breast, liver, ovarian, and colorectal cancer and its expression levels are closely correlated with tumor aggressiveness and metastasis.

It is found in the nucleus. It localises to the cytoplasm. The protein localises to the nucleus envelope. Its subcellular location is the cytoskeleton. Transcriptional coregulator which can act as both a transcriptional corepressor and coactivator. Acts as a component of the histone deacetylase NuRD complex which participates in the remodeling of chromatin. In the NuRD complex, regulates transcription of its targets by modifying the acetylation status of the target chromatin and cofactor accessibility to the target DNA. In conjunction with other components of NuRD, acts as a transcriptional corepressor of BRCA1, ESR1, TFF1 and CDKN1A. Acts as a transcriptional coactivator of BCAS3, and SUMO2, independent of the NuRD complex. Stimulates the expression of WNT1 by inhibiting the expression of its transcriptional corepressor SIX3. Regulates p53-dependent and -independent DNA repair processes following genotoxic stress. Regulates the stability and function of p53/TP53 by inhibiting its ubiquitination by COP1 and MDM2 thereby regulating the p53-dependent DNA repair. Plays a role in the regulation of the circadian clock and is essential for the generation and maintenance of circadian rhythms under constant light and for normal entrainment of behavior to light-dark (LD) cycles. Positively regulates the CLOCK-BMAL1 heterodimer mediated transcriptional activation of its own transcription and the transcription of CRY1. Regulates deacetylation of BMAL1 by regulating SIRT1 expression, resulting in derepressing CRY1-mediated transcription repression. With TFCP2L1, promotes establishment and maintenance of pluripotency in embryonic stem cells (ESCs) and inhibits endoderm differentiation. Its function is as follows. Binds to ESR1 and sequesters it in the cytoplasm and enhances its non-genomic responses. The sequence is that of Metastasis-associated protein MTA1 (MTA1) from Homo sapiens (Human).